The following is a 115-amino-acid chain: MARVKRGNIARKRRNKILNLAKGFRGGNKNLFRTANQRVMKALCNAYRDRRRRKRDFRRLWIARINASARINGTNYSKLINGLKTSEIIINRKMLAQLALNDPQSFEKIVSAVSK.

Belongs to the bacterial ribosomal protein bL20 family.

Functionally, binds directly to 23S ribosomal RNA and is necessary for the in vitro assembly process of the 50S ribosomal subunit. It is not involved in the protein synthesizing functions of that subunit. The polypeptide is Large ribosomal subunit protein bL20 (Prochlorococcus marinus (strain MIT 9515)).